The primary structure comprises 251 residues: MTSLVSLENVSVSFGQRRVLSDVSLELSPGKILTLLGPNGAGKSTLVRVVLGLVAPDEGVIKRNGQLRIGYVPQKLYLDTTLPLTVNRFLRLRPGTQKTDILPALKRVQAGHLIDAPMQKLSGGETQRVLLARALLNRPQLLVLDEPTQGVDVNGQVALYDLIDQLRRELDCAVLMVSHDLHLVMAKTDEVLCLNHHICCSGAPEVVSMHPEFISMFGPRGAEQLGIYRHHHNHRHDLQGRIVLRRGNGHS.

Residues 5–220 form the ABC transporter domain; sequence VSLENVSVSF…PEFISMFGPR (216 aa). 37–44 contacts ATP; it reads GPNGAGKS.

The protein belongs to the ABC transporter superfamily. Zinc importer (TC 3.A.1.15.5) family. In terms of assembly, the complex is composed of two ATP-binding proteins (ZnuC), two transmembrane proteins (ZnuB) and a solute-binding protein (ZnuA).

The protein resides in the cell inner membrane. It carries out the reaction Zn(2+)(out) + ATP(in) + H2O(in) = Zn(2+)(in) + ADP(in) + phosphate(in) + H(+)(in). Functionally, part of the ABC transporter complex ZnuABC involved in zinc import. Responsible for energy coupling to the transport system. The sequence is that of Zinc import ATP-binding protein ZnuC from Salmonella choleraesuis (strain SC-B67).